Consider the following 457-residue polypeptide: Argininosuccinate lyase (457 aa).

This sequence belongs to the lyase 1 family. Argininosuccinate lyase subfamily.

The protein localises to the cytoplasm. The enzyme catalyses 2-(N(omega)-L-arginino)succinate = fumarate + L-arginine. The protein operates within amino-acid biosynthesis; L-arginine biosynthesis; L-arginine from L-ornithine and carbamoyl phosphate: step 3/3. The protein is Argininosuccinate lyase of Haemophilus influenzae (strain ATCC 51907 / DSM 11121 / KW20 / Rd).